A 601-amino-acid chain; its full sequence is MTASPKNEMWTVFKRLMGYLKPMKGMFLLSVVGLIVYGLVDAAFISFIGPFIDKGFSSSAPAISNGIALPTSQGFHADNQVLLMAPIVVILMFSLRGFANFVSTYGISYMSARLIMDMRQQVFEHYLSLPVSYMDKENTGNLISKVTFDTEQIARASGSALISIVRDSVTIIGMLGLMFYNSWKLSLCILVIGPIMGVVITIVSRRFRKVSKQIQTAMGDVSAATEQMIKGHKNVLAFGGQETETARFAKINDRNRHQNMKLAVAQAVSQPLIMVIGSFALAFVLYAASLDSMKADLTAGTFATILGAMMAMLQPIKNLTRVNAEFQRGIAACTTVFELLDTVPESDTGTYTVARAKGNLRFDNVSFSYEGQERRALEKIDFEVSQGQTLALVGRSGSGKSTIASLVTRFYTGLESGDILLDDVSIYDYSLKSLRSQVALVSQQVTLFNDTIANNIAYAYPGEVTREQIIEAATLAHAMEFIEQLPDGLDTQVGENGVLLSGGQRQRIAIARAMLRDAPVLILDEATSALDTESEKAIQQGLDNLRQNRTSVVIAHRLSTIESADQILVVDQGRIVERGTHKSLLELGGMYAKLYQMQFGS.

The ABC transmembrane type-1 domain occupies 28–328; it reads LLSVVGLIVY…LTRVNAEFQR (301 aa). 6 helical membrane-spanning segments follow: residues 32-52, 81-101, 160-180, 183-203, 267-287, and 296-316; these read VGLI…GPFI, VLLM…FANF, ALIS…LMFY, WKLS…ITIV, AVSQ…VLYA, and DLTA…LQPI. The 238-residue stretch at 360–597 folds into the ABC transporter domain; that stretch reads LRFDNVSFSY…GGMYAKLYQM (238 aa). 394–401 serves as a coordination point for ATP; that stretch reads GRSGSGKS.

This sequence belongs to the ABC transporter superfamily. Lipid exporter (TC 3.A.1.106) family. As to quaternary structure, homodimer.

Its subcellular location is the cell inner membrane. It catalyses the reaction ATP + H2O + lipid A-core oligosaccharideSide 1 = ADP + phosphate + lipid A-core oligosaccharideSide 2.. Involved in lipopolysaccharide (LPS) biosynthesis. Translocates lipid A-core from the inner to the outer leaflet of the inner membrane. Transmembrane domains (TMD) form a pore in the inner membrane and the ATP-binding domain (NBD) is responsible for energy generation. The protein is ATP-dependent lipid A-core flippase of Shewanella oneidensis (strain ATCC 700550 / JCM 31522 / CIP 106686 / LMG 19005 / NCIMB 14063 / MR-1).